Consider the following 41-residue polypeptide: Alpha-conotoxin CIB (41 aa).

A propeptide spanning residues 1-21 is cleaved from the precursor; sequence SDGRNEAANDEASDVIELALK. 2 disulfide bridges follow: Cys-23/Cys-29 and Cys-24/Cys-37. Residues 25 to 27 are ser-Xaa-Pro motif, crucial for potent interaction with nAChR; sequence SNP. Cys-37 is modified (cysteine amide).

Belongs to the conotoxin A superfamily. Expressed by the venom duct.

Its subcellular location is the secreted. In terms of biological role, alpha-conotoxins act on postsynaptic membranes, they bind to the nicotinic acetylcholine receptors (nAChR) and thus inhibit them. This toxin blocks rat neuronal nAChR alpha-3-beta-2/CHRNA3-CHRNB2 (IC(50)=128.9 nM) and alpha-7/CHRNA7 (IC(50)=1511 nM). In vivo, intramuscular injection into zebrafish does not produce any effect on the locomotion of zebrafish. The polypeptide is Alpha-conotoxin CIB (Conus catus (Cat cone)).